Here is a 983-residue protein sequence, read N- to C-terminus: UPF0182 protein KRH_08700 (983 aa).

The next 7 helical transmembrane spans lie at 22–42 (GALL…VGFT), 67–87 (VIGL…LSLW), 116–136 (VVMV…VATQ), 172–192 (LLIG…LLMH), 213–233 (VHLG…FWLD), 261–281 (GILA…GFIG), and 288–308 (IGAA…PWAI). The interval 893–959 (GAKTDTGAGV…DKAMKDGDWT (67 aa)) is disordered. The span at 947-959 (QDSDKAMKDGDWT) shows a compositional bias: basic and acidic residues.

The protein belongs to the UPF0182 family.

It localises to the cell membrane. The sequence is that of UPF0182 protein KRH_08700 from Kocuria rhizophila (strain ATCC 9341 / DSM 348 / NBRC 103217 / DC2201).